The following is a 549-amino-acid chain: Copalyl diphosphate synthase (549 aa).

A DXDDTA motif motif is present at residues 321–326 (DADDTA). The QXXDGSW motif motif lies at 451-457 (QRDDGSW).

Belongs to the terpene synthase family. It depends on Mg(2+) as a cofactor.

It carries out the reaction (2E,6E,10E)-geranylgeranyl diphosphate = (+)-copalyl diphosphate. Its function is as follows. Involved in the biosynthesis of the labdane-type bicyclic diterpene labda-8(17),12(E),14-triene. Catalyzes the conversion of geranylgeranyl diphosphate (GGDP) into (+)-copalyl diphosphate. The chain is Copalyl diphosphate synthase from Streptomyces anulatus (Streptomyces chrysomallus).